The following is a 178-amino-acid chain: Probable inosine/xanthosine triphosphatase (178 aa).

It belongs to the YjjX NTPase family. As to quaternary structure, homodimer. Requires Mg(2+) as cofactor. It depends on Mn(2+) as a cofactor.

The enzyme catalyses XTP + H2O = XDP + phosphate + H(+). It carries out the reaction ITP + H2O = IDP + phosphate + H(+). In terms of biological role, phosphatase that hydrolyzes non-canonical purine nucleotides such as XTP and ITP to their respective diphosphate derivatives. Probably excludes non-canonical purines from DNA/RNA precursor pool, thus preventing their incorporation into DNA/RNA and avoiding chromosomal lesions. The protein is Probable inosine/xanthosine triphosphatase of Pyrobaculum aerophilum (strain ATCC 51768 / DSM 7523 / JCM 9630 / CIP 104966 / NBRC 100827 / IM2).